The chain runs to 152 residues: Toxin Res (152 aa).

This sequence belongs to the MbcT/ParT/Res family. In terms of assembly, homodimer. Forms a complex with cognate antitoxin Xre.

Toxic component of a type II toxin-antitoxin (TA) system. Expression in E.coli inhibits cell growth; bacteriostasis is neutralized by expression of cognate antitoxin Xre. Probably depletes intracellular NAD(+). The chain is Toxin Res from Yersinia enterocolitica serotype O:8 / biotype 1B (strain NCTC 13174 / 8081).